The primary structure comprises 956 residues: Valine--tRNA ligase (956 aa).

The 'HIGH' region signature appears at proline 43–histidine 53. Positions lysine 556–serine 560 match the 'KMSKS' region motif. Lysine 559 provides a ligand contact to ATP. Positions proline 889–phenylalanine 920 form a coiled coil.

The protein belongs to the class-I aminoacyl-tRNA synthetase family. ValS type 1 subfamily. Monomer.

The protein resides in the cytoplasm. The enzyme catalyses tRNA(Val) + L-valine + ATP = L-valyl-tRNA(Val) + AMP + diphosphate. Catalyzes the attachment of valine to tRNA(Val). As ValRS can inadvertently accommodate and process structurally similar amino acids such as threonine, to avoid such errors, it has a 'posttransfer' editing activity that hydrolyzes mischarged Thr-tRNA(Val) in a tRNA-dependent manner. The chain is Valine--tRNA ligase from Buchnera aphidicola subsp. Baizongia pistaciae (strain Bp).